The chain runs to 1842 residues: MALPLWALTFLGLTGLGLSLRSRKPESFRSETELNHLAVDEVTGVVYVGAVNALYQLSADLHVQQHVVTGPFMDNKKCTPPIEASQCHEAVLTDNFNQLLLLDPPGKRLVECGSLFKGICALRAMSNISVRLFYEDGSGEKSFVASNDERVATVGLVTSTRPDGERVLFVGKGNGPHDNGIIVSTRLLDRAEGREAFEAYSDHTTFKAGYLSTNTQQFVAAFEDDFYVFFVFNHQDKHPAKNRTLLARMCKDDPSYYSYVEMDLQCQDPSDPQDSAFGTCLAASVATSGAGRALYAVFSRDGRSTGGPGAGLCVFPLDKVREKIEANRNACYTGAREAGRTIFYKPFHGEIQCGGHLIGASESFPCGSEHLPYPLGSRDGLVATAVLHRGGLNLTAVTVTAENDHTVAFLGTSDGRILKVYLAPDGTSAEYGSIPVDINKKIKQDLALSGNLSSLYAMTQDKVFRLPVQECLSYVTCAQCRDSQDPYCGWCVIEGRCTRKSECSRAEETGHWLWSREKSCVAITDAFPQNMSRRAQGEVRLSVSPLPTLTEDDELLCLFGDSPPHPARVEDDTVICNSPSSIPSTPPGQDHVDVSIQLLLKSGSVFLTSHQYPFYDCREAMSLVENLPCISCASNRWTCQWDLQYYECREASPNPEEGIIRAHMEDNCPQFLAPDPLVIPMNHETEVTFQGKNLETVKVSSLYVGSELLNFEETVTMHESDTFSFRTPKLSHDGNETLPLHLYVKSFGKNIDSKLQVTLYNCSFGRSDCSLCLAADPAYRCVWCRGQNRCVYEALCSNVTSECPPPVITRIQPETGPLGGGILVTIHGSNLGVKADDVKKITVAGQNCAFEPRGYSVSTRIVCAIEASEMPFTGGIEVDVNGKLGHSPPHVQFTYQQPQPLSVEPRQGPQAGGTTLTINGTHLDTGSKEDVRVTLNDVPCEVTKFGAQLQCVTGQQLAPGQVTLEIYYGGSRVPSPGISFTYCENPMIRAFEPLRSFVSGGRSINVTGQGFSLIQKFAMVVIAEPLRSWRRRRREAGALERVTVEGMEYVFYNDTKVVFLSPAVPEEPEAYNLTVLIRMDGHCAPLRTEAGVFEYVADPTFENFTGGVKKQVNKLIHARGTNLNKAMTLEEAEAFVGAERCIMKTLTETDLYCEPPEVQPPPKRRQKRDTAHNLPEFIVKFGSREWVLGRVEYDTRASDVPLSLILPLVMVPMVFIIVVSIYCYWRKSQQAEREYEKIKSQLEGLEESVRDRCKKEFTDLMIEMEDQTNDVHEAGIPTLDYKTYTDRVFFLPSKDGDKDVMITGKLDIPESRRPIVEQALYQFSNLLNSKSFLINFIHTLENQREFSARAKVYFASLLTVALHGKLEYYTDIMRTLFLELMEQYVVAKNPKLMLRRSETVVERMLSNWMSICLYQYLKDSAGEPLYKLFKAIKHQVEKGPVDAVQKKAKYTLNDTGLLGDDVEYAPLTVSVIVQDEGIDAIPVKVLNCDTISQVKEKIIDQVYRTQPCSCWPKPDSVVLEWRPGSTAQILSDLDLTSQREGRWKRINTLMHYNVRDGATLILSKVGVSQQPEDSQQDLPGERHALLEEENRVWHLVRPTDEVDEGKSKRGSMKEKERTKAITEIYLTRLLSVKGTLQQFVDNFFQSVLAPGHAVPPAVKYFFDFLDEQAEKHDIRDEDTIHIWKTNSLPLRFWVNILKNPHFIFDVHVHEVVDASLSVIAQTFMDACTRTEHKLSRDSPSNKLLYAKEISTYKKMVEDYYKGIRQMVQVSDQDMNTHLAEISRAHTDSLNTLVALHQLYQYTQKYYDEIINALEEDPAAQKMQLAFRLQQIAAALENKVTDL.

Residues 1 to 19 form the signal peptide; sequence MALPLWALTFLGLTGLGLS. A Sema domain is found at 20 to 468; that stretch reads LRSRKPESFR…TQDKVFRLPV (449 aa). The Extracellular portion of the chain corresponds to 20–1201; sequence LRSRKPESFR…EYDTRASDVP (1182 aa). Intrachain disulfides connect C78-C87 and C112-C120. 2 N-linked (GlcNAc...) asparagine glycosylation sites follow: N127 and N242. 3 disulfide bridges follow: C250–C366, C266–C313, and C331–C353. N393 and N451 each carry an N-linked (GlcNAc...) asparagine glycan. Intrachain disulfides connect C471–C488, C477–C520, C480–C497, C491–C503, and C557–C576. N798 carries an N-linked (GlcNAc...) asparagine glycan. IPT/TIG domains are found at residues 806–895, 898–982, and 986–1095; these read PVIT…QFTY, PQPL…SFTY, and PMIR…VFEY. N-linked (GlcNAc...) asparagine glycosylation is found at N919, N1053, and N1072. A helical membrane pass occupies residues 1202-1222; sequence LSLILPLVMVPMVFIIVVSIY. The Cytoplasmic segment spans residues 1223–1842; sequence CYWRKSQQAE…AALENKVTDL (620 aa). Phosphoserine is present on residues S1240, S1248, and S1574.

It belongs to the plexin family. As to quaternary structure, monomer, and heterodimer with PLXNB1. Interacts with MET, ARHGEF11 and ARHGEF12. May also interact with MST1R. Detected in macrophages from spleen and bone marrow (at protein level). Detected in granule cells in the developing cerebellum, dentate gyrus and olfactory bulb. Expressed in neurons and glia in the developing hippocampus.

Its subcellular location is the cell membrane. Cell surface receptor for SEMA4C, SEMA4D and SEMA4G that plays an important role in cell-cell signaling. Plays a role in glutamatergic synapse development and is required for SEMA4A-mediated excitatory synapse development. Binding to class 4 semaphorins promotes downstream activation of RHOA and phosphorylation of ERBB2 at 'Tyr-1248'. Also acts as a cell surface receptor for angiogenin (ANG); promoting ANG endocytosis and translocation to the cytoplasm or nucleus. Required for normal differentiation and migration of neuronal cells during brain corticogenesis and for normal embryonic brain development. Regulates the migration of cerebellar granule cells in the developing brain. Plays a role in RHOA activation and subsequent changes of the actin cytoskeleton. Plays a role in axon guidance, invasive growth and cell migration. May modulate the activity of RAC1 and CDC42. Down-regulates macrophage migration in wound-healing assays (in vitro). The protein is Plexin-B2 of Mus musculus (Mouse).